The sequence spans 122 residues: Ribosomal protein eL22-like (122 aa).

Residues S112, S118, and S120 each carry the phosphoserine modification.

Belongs to the eukaryotic ribosomal protein eL22 family.

The chain is Ribosomal protein eL22-like (RPL22L1) from Bos taurus (Bovine).